A 386-amino-acid chain; its full sequence is Eukaryotic translation initiation factor 3 subunit M (386 aa).

The region spanning 181–343 (NSELASKVMI…RKVHISSTMH (163 aa)) is the PCI domain.

This sequence belongs to the eIF-3 subunit M family. As to quaternary structure, component of the eukaryotic translation initiation factor 3 (eIF-3) complex.

It is found in the cytoplasm. Component of the eukaryotic translation initiation factor 3 (eIF-3) complex, which is involved in protein synthesis of a specialized repertoire of mRNAs and, together with other initiation factors, stimulates binding of mRNA and methionyl-tRNAi to the 40S ribosome. The eIF-3 complex specifically targets and initiates translation of a subset of mRNAs involved in cell proliferation. This chain is Eukaryotic translation initiation factor 3 subunit M, found in Culex quinquefasciatus (Southern house mosquito).